The sequence spans 419 residues: Putative zinc metalloprotease spyM18_2031 (419 aa).

A Zn(2+)-binding site is contributed by histidine 18. Residue glutamate 19 is part of the active site. Zn(2+) is bound at residue histidine 22. The next 4 membrane-spanning stretches (helical) occupy residues 169 to 191 (LITN…ILLV), 301 to 323 (LAWS…FSLN), 343 to 365 (LESV…LIPI), and 392 to 411 (AYIT…AVTW). Positions 175 to 274 (GPMNNFILGI…LKTVAVKPQK (100 aa)) constitute a PDZ domain.

This sequence belongs to the peptidase M50B family. Zn(2+) serves as cofactor.

Its subcellular location is the cell membrane. This is Putative zinc metalloprotease spyM18_2031 from Streptococcus pyogenes serotype M18 (strain MGAS8232).